The primary structure comprises 304 residues: Light-independent protochlorophyllide reductase iron-sulfur ATP-binding protein (304 aa).

ATP is bound by residues 46 to 51 and Lys75; that span reads GIGKST. Residue Ser50 participates in Mg(2+) binding. The [4Fe-4S] cluster site is built by Cys131 and Cys165. ATP contacts are provided by residues 216 to 217 and 240 to 242; these read NR and PDL.

Belongs to the NifH/BchL/ChlL family. In terms of assembly, homodimer. Protochlorophyllide reductase is composed of three subunits; BchL, BchN and BchB. It depends on [4Fe-4S] cluster as a cofactor.

It carries out the reaction chlorophyllide a + oxidized 2[4Fe-4S]-[ferredoxin] + 2 ADP + 2 phosphate = protochlorophyllide a + reduced 2[4Fe-4S]-[ferredoxin] + 2 ATP + 2 H2O. It functions in the pathway porphyrin-containing compound metabolism; bacteriochlorophyll biosynthesis (light-independent). Its function is as follows. Component of the dark-operative protochlorophyllide reductase (DPOR) that uses Mg-ATP and reduced ferredoxin to reduce ring D of protochlorophyllide (Pchlide) to form chlorophyllide a (Chlide). This reaction is light-independent. The L component serves as a unique electron donor to the NB-component of the complex, and binds Mg-ATP. The chain is Light-independent protochlorophyllide reductase iron-sulfur ATP-binding protein from Rhodobacter capsulatus (strain ATCC BAA-309 / NBRC 16581 / SB1003).